Here is a 123-residue protein sequence, read N- to C-terminus: Large ribosomal subunit protein uL14 (123 aa).

This sequence belongs to the universal ribosomal protein uL14 family. As to quaternary structure, part of the 50S ribosomal subunit. Forms a cluster with proteins L3 and L19. In the 70S ribosome, L14 and L19 interact and together make contacts with the 16S rRNA in bridges B5 and B8.

Functionally, binds to 23S rRNA. Forms part of two intersubunit bridges in the 70S ribosome. The sequence is that of Large ribosomal subunit protein uL14 from Vibrio vulnificus (strain CMCP6).